Reading from the N-terminus, the 197-residue chain is Neurturin (197 aa).

Residues 1–19 (MQRWKAAALASVLCSSVLS) form the signal peptide. Positions 20 to 95 (IWMCREGLLL…RAGPRRRRAR (76 aa)) are excised as a propeptide. The tract at residues 74–93 (TPWAGRPPGPRRRAGPRRRR) is disordered. Basic residues predominate over residues 82–93 (GPRRRAGPRRRR). 3 cysteine pairs are disulfide-bonded: Cys-103–Cys-165, Cys-130–Cys-194, and Cys-134–Cys-196. The heparan sulfate group site is built by Arg-149, Arg-158, Arg-160, and Gln-162.

This sequence belongs to the TGF-beta family. GDNF subfamily. As to quaternary structure, homodimer; disulfide-linked. Interacts with GFRA2 coreceptor and RET: forms a 2:2:2 ternary complex composed of NRTN ligand, GFRA2 and RET receptor. Also forms a 4:4:4 tetrameric complex composed of 4 copies of NRTN ligand, GFRA2 and RET receptor, which prevents endocytosis of RET.

The protein localises to the secreted. Growth factor that supports the survival of sympathetic neurons in culture. May regulate the development and maintenance of the CNS. Involved in the development of the neural crest. Might control the size of non-neuronal cell population such as haemopoietic cells. Acts by binding to its coreceptor, GFRA2, leading to autophosphorylation and activation of the RET receptor. Heparan sulfate-binding is required for signaling. In Homo sapiens (Human), this protein is Neurturin.